The primary structure comprises 92 residues: Large ribosomal subunit protein uL24 (92 aa).

This sequence belongs to the universal ribosomal protein uL24 family. As to quaternary structure, part of the 50S ribosomal subunit.

One of two assembly initiator proteins, it binds directly to the 5'-end of the 23S rRNA, where it nucleates assembly of the 50S subunit. In terms of biological role, one of the proteins that surrounds the polypeptide exit tunnel on the outside of the subunit. In Opitutus terrae (strain DSM 11246 / JCM 15787 / PB90-1), this protein is Large ribosomal subunit protein uL24.